Reading from the N-terminus, the 529-residue chain is Peptide chain release factor 3 (529 aa).

Residues 11 to 280 (AKRRTFAIIS…GLVKWAPAPM (270 aa)) form the tr-type G domain. Residues 20–27 (SHPDAGKT), 88–92 (DTPGH), and 142–145 (NKLD) contribute to the GTP site.

The protein belongs to the TRAFAC class translation factor GTPase superfamily. Classic translation factor GTPase family. PrfC subfamily.

It is found in the cytoplasm. Increases the formation of ribosomal termination complexes and stimulates activities of RF-1 and RF-2. It binds guanine nucleotides and has strong preference for UGA stop codons. It may interact directly with the ribosome. The stimulation of RF-1 and RF-2 is significantly reduced by GTP and GDP, but not by GMP. This Photorhabdus laumondii subsp. laumondii (strain DSM 15139 / CIP 105565 / TT01) (Photorhabdus luminescens subsp. laumondii) protein is Peptide chain release factor 3.